The primary structure comprises 167 residues: MARYEDLPYRTCVGVMLINAKGLVFIGRRAGGIEHIDDTHVWQMPQGGVDPGEDTWAAAKRELYEETSVRSVERLGEVPDWLIYDIPRTVAGRAWKGRYRGQRQKWFAVRFTGKDSEINVENPGGGHKAEFVSWRWEPMKNLPGLIIPFKRPVYERVVKEFSALAEE.

A Nudix hydrolase domain is found at 8–159; it reads PYRTCVGVML…KRPVYERVVK (152 aa). Positions 47-68 match the Nudix box motif; it reads GGVDPGEDTWAAAKRELYEETS.

This sequence belongs to the Nudix hydrolase family. RppH subfamily. It depends on a divalent metal cation as a cofactor.

Functionally, accelerates the degradation of transcripts by removing pyrophosphate from the 5'-end of triphosphorylated RNA, leading to a more labile monophosphorylated state that can stimulate subsequent ribonuclease cleavage. The polypeptide is RNA pyrophosphohydrolase (Bradyrhizobium diazoefficiens (strain JCM 10833 / BCRC 13528 / IAM 13628 / NBRC 14792 / USDA 110)).